A 359-amino-acid polypeptide reads, in one-letter code: 1-deoxy-D-xylulose 5-phosphate reductoisomerase (359 aa).

NADPH-binding residues include T12, G13, S14, I15, K38, and N39. K105 provides a ligand contact to 1-deoxy-D-xylulose 5-phosphate. E106 serves as a coordination point for NADPH. D130 contacts Mn(2+). 4 residues coordinate 1-deoxy-D-xylulose 5-phosphate: S131, E132, S152, and H175. E132 is a binding site for Mn(2+). G181 provides a ligand contact to NADPH. The 1-deoxy-D-xylulose 5-phosphate site is built by S188, N193, K194, and E197. E197 contacts Mn(2+).

The protein belongs to the DXR family. Requires Mg(2+) as cofactor. Mn(2+) is required as a cofactor.

The enzyme catalyses 2-C-methyl-D-erythritol 4-phosphate + NADP(+) = 1-deoxy-D-xylulose 5-phosphate + NADPH + H(+). It functions in the pathway isoprenoid biosynthesis; isopentenyl diphosphate biosynthesis via DXP pathway; isopentenyl diphosphate from 1-deoxy-D-xylulose 5-phosphate: step 1/6. Functionally, catalyzes the NADPH-dependent rearrangement and reduction of 1-deoxy-D-xylulose-5-phosphate (DXP) to 2-C-methyl-D-erythritol 4-phosphate (MEP). The polypeptide is 1-deoxy-D-xylulose 5-phosphate reductoisomerase (Pseudothermotoga lettingae (strain ATCC BAA-301 / DSM 14385 / NBRC 107922 / TMO) (Thermotoga lettingae)).